We begin with the raw amino-acid sequence, 509 residues long: GMP synthase [glutamine-hydrolyzing] (509 aa).

Residues 4–194 (LVLVVDFGGQ…LYNICGLENS (191 aa)) enclose the Glutamine amidotransferase type-1 domain. Cys81 acts as the Nucleophile in catalysis. Active-site residues include His168 and Glu170. Residues 195-384 (WSMASFAEEK…LGIPHHLVWR (190 aa)) form the GMPS ATP-PPase domain. Residue 222 to 228 (SGGVDSS) coordinates ATP.

In terms of assembly, homodimer.

It carries out the reaction XMP + L-glutamine + ATP + H2O = GMP + L-glutamate + AMP + diphosphate + 2 H(+). The protein operates within purine metabolism; GMP biosynthesis; GMP from XMP (L-Gln route): step 1/1. Functionally, catalyzes the synthesis of GMP from XMP. The protein is GMP synthase [glutamine-hydrolyzing] of Clostridium perfringens (strain 13 / Type A).